The sequence spans 48 residues: uncharacterized protein (48 aa).

Residues 20–37 (ILASPLFFANYVLHAAIH) traverse the membrane as a helical segment.

The protein localises to the membrane. This is an uncharacterized protein from Saccharomyces cerevisiae (strain ATCC 204508 / S288c) (Baker's yeast).